We begin with the raw amino-acid sequence, 197 residues long: Transposon Tn10 TetC protein (197 aa).

Residues 12-72 (KSTYQSLVNS…ACYKQQLIMI (61 aa)) enclose the HTH tetR-type domain. A DNA-binding region (H-T-H motif) is located at residues 35-54 (SIDEISGKALVTKGAFYHHF).

This is Transposon Tn10 TetC protein (tetC) from Escherichia coli.